The chain runs to 229 residues: Putative germin-like protein 12-3 (229 aa).

An N-terminal signal peptide occupies residues 1 to 22 (MASSNFFLLIPLIALVTTQAMA). The cysteines at positions 32 and 47 are disulfide-linked. One can recognise a Cupin type-1 domain in the interval 62–217 (ANLDKPMDIT…AFQVDKKAVD (156 aa)). N-linked (GlcNAc...) asparagine glycosylation occurs at N78. Mn(2+)-binding residues include H111, H113, E118, and H162.

It belongs to the germin family. In terms of assembly, oligomer (believed to be a pentamer but probably hexamer).

It is found in the secreted. The protein resides in the extracellular space. It localises to the apoplast. Functionally, may play a role in plant defense. Probably has no oxalate oxidase activity even if the active site is conserved. This Oryza sativa subsp. japonica (Rice) protein is Putative germin-like protein 12-3.